A 362-amino-acid polypeptide reads, in one-letter code: MRVDLFDFDLPEALIALRPVEPRDAARLLRVAPGHPLAEARVRDLPALLRPGDCLVFNDTRVIPARLRGLRARPDGSSVRVEAMLHRREGPDCWRAFARPGKRLREGDRIRFGSGRDGSACDLGHLDATVAARGEEGEITLAFDLAGAFLDEAVARLGELPLPPYIAGRRPADARDAADYQTVYAREPGAVAAPTAGLHFTPDLLARLGAAGIGEARLTLHVGAGTFLPVKAQDTEAHRMHAETGEITPGTAARLNRARAEGGRIVAVGTTSLRLLESAAEPDGTIRPFAGATDIFITPGYRFRAVDVLMTNFHLPRSTLFMLVSAFAGLETMRAAYAHAVAQGYRFYSYGDASLLFRAEGR.

Belongs to the QueA family. In terms of assembly, monomer.

It is found in the cytoplasm. The enzyme catalyses 7-aminomethyl-7-carbaguanosine(34) in tRNA + S-adenosyl-L-methionine = epoxyqueuosine(34) in tRNA + adenine + L-methionine + 2 H(+). Its pathway is tRNA modification; tRNA-queuosine biosynthesis. Transfers and isomerizes the ribose moiety from AdoMet to the 7-aminomethyl group of 7-deazaguanine (preQ1-tRNA) to give epoxyqueuosine (oQ-tRNA). This is S-adenosylmethionine:tRNA ribosyltransferase-isomerase from Methylobacterium sp. (strain 4-46).